A 308-amino-acid polypeptide reads, in one-letter code: Ribosomal RNA large subunit methyltransferase F (308 aa).

Belongs to the methyltransferase superfamily. METTL16/RlmF family.

It is found in the cytoplasm. It carries out the reaction adenosine(1618) in 23S rRNA + S-adenosyl-L-methionine = N(6)-methyladenosine(1618) in 23S rRNA + S-adenosyl-L-homocysteine + H(+). Its function is as follows. Specifically methylates the adenine in position 1618 of 23S rRNA. The protein is Ribosomal RNA large subunit methyltransferase F of Salmonella heidelberg (strain SL476).